Reading from the N-terminus, the 1116-residue chain is MNQLTVSYGLISPDYCTSQDAHILPITKILYPDIPGKNYFLTSGRDGSIILHKNTQLSNEPETAATTIKNDAIRMQVHSDWASDLIHVNMKNSDPSAGDTFISVSHDFSIVLISVNAQLTTWDKKIIGDHDDYIKCIVPIHYEMSNDYELEEQEGGPDNVHDGINNGIVVDEQNNFLFVTGGLDRKIKLWCLSSGPEKMATLLHTFDNAQSNDTGSIYSMSPIIPKYSFDDNQTSRPFDFVAGDCNGDLIFYSCKYRKEVIRIQNAHRTNIKVVRTLDDSTRLISTSSDGVINVWDLNCRHDQTTGALQLPKKIGSWSWDSSIWCVQGTSLDKLYFGDSQGNVMRANLSSYEDAKLTRIFKPDHHHHHHHHHEHEEQNISTTDAKVKKYGGILDIALLPNEKLLFSFCTDSNLNVLDLTNNHFSVNEGGFALTRSSLLTNRRHVITENTKGQMQRWDIVSCELLNTFDSSEGSFDDIVMKYTSKEILSHWCTVSVKVGMLFVKINPKFLKTEVYGSALKDYQVVNNIEINSDERYNLGKIVINSLFNEFISYEVQKDKLLRKKIFSLKKKDLTNSLTLDTGYNSESKKNNKDKKRKSTFKISSTLSIGNTNSSGTPPNSAPATPVMAETIVLEEQPLLQSASDKAIDDSLELVQPLPASKKPYFRTQSSGSLLSRKFKSFRSTSGRATTGLNTPEEPKGILPDTPHVINDDSAFPQAINTTQQSKDATPESMLWNHPFKLEQKLSAISSQDLPSNNTHNKLRSSENSRANSTSTLEGNEKKKPEFMPDLLEQIQESYKQQYMNTSSLKYLTKRLPVTKIIKASSCPIIRVKSATLVLVHLWKEGSCGGRVLFSTLLPPSHVDNETVSGGKENSKPPDDEEVDLQAVDDDKLGKYDLIDGELGSRLNRRQIFEQLEENLPYWFAKALFRDIKTVEEQPKLNFLIMPWSSVGGSEAAGNENKKKFISASDTTESSGNDSSDSSLGNGNEAVSPSTQQQFHNMLKFGRPKTSEQELNPTDLPRISEANVKLVAPGMIRVKKIKLYVADRFETKTPEMKAKMEPSLWLDLLCRGQVLDNDMTLNTVRTLYWKSQGDIVLEYRRKVHNSPLVHEVNGNEGK.

7 WD repeats span residues 21-62 (AHIL…NEPE), 91-132 (KNSD…DHDD), 160-200 (VHDG…EKMA), 219-262 (SMSP…EVIR), 266-305 (AHRT…DQTT), 387-426 (KKYG…FSVN), and 428-466 (GGFA…LLNT). Positions 578 to 600 (LDTGYNSESKKNNKDKKRKSTFK) are disordered. S668 is subject to Phosphoserine. T693 carries the post-translational modification Phosphothreonine. Residues 747 to 776 (ISSQDLPSNNTHNKLRSSENSRANSTSTLE) are compositionally biased toward polar residues. Disordered stretches follow at residues 747–784 (ISSQ…KKPE) and 963–994 (FISA…PSTQ). The span at 967–987 (SDTTESSGNDSSDSSLGNGNE) shows a compositional bias: low complexity.

In terms of assembly, interacts (via its WD repeats) with ubiquitin.

It localises to the cytoplasm. Functionally, ubiquitin-binding protein involved in the resistance to phenanthroline, sanguinarine, nordihydroguaiaretic acid (NDGA), isopropyl (N-3-chloro-phenyl)-carbamate (IPCPC) and guanosine 5'-O-(2-thiodiphosphate). This chain is DUB-associated factor 1, found in Saccharomyces cerevisiae (strain ATCC 204508 / S288c) (Baker's yeast).